The following is a 572-amino-acid chain: Vacuolar protein sorting-associated protein vps901 (572 aa).

Basic and acidic residues-rich tracts occupy residues 1–31 (MDYPSFHEDPTKDESTVAEQRKGQSNEEKPL) and 39–53 (DEQRNAYNEHCKNHD). The disordered stretch occupies residues 1–108 (MDYPSFHEDP…HENNPGQQEI (108 aa)). Polar residues predominate over residues 69–80 (QYEQTDSSSDQE). The span at 82–98 (MNEKQSLDKENRNDNIP) shows a compositional bias: basic and acidic residues. Residues 219 to 357 (VEEDRVLSEK…IETLDCSSLT (139 aa)) form the VPS9 domain. The disordered stretch occupies residues 430-502 (QIDTPESKEY…IVHEEQPVDD (73 aa)). Residues 445 to 457 (PRGSSHSGSFTTD) show a composition bias toward polar residues. The CUE domain maps to 529–571 (REKAEAITALRAMFPAFDSEVIEVVLNAQQGRLSSSIDSLLEM).

Its function is as follows. Required for vacuolar protein sorting; may be required for the consumption of transport vesicles containing vacuolar protein precursors. Required for vacuolar fusion. The sequence is that of Vacuolar protein sorting-associated protein vps901 (vps901) from Schizosaccharomyces pombe (strain 972 / ATCC 24843) (Fission yeast).